We begin with the raw amino-acid sequence, 235 residues long: 2,3-bisphosphoglycerate-dependent phosphoglycerate mutase 1 (235 aa).

Residues 8–15 (RHGESVAN), 21–22 (TG), Arg60, 87–90 (ERHY), Lys98, and 114–115 (RR) contribute to the substrate site. His9 (tele-phosphohistidine intermediate) is an active-site residue. Glu87 serves as the catalytic Proton donor/acceptor.

This sequence belongs to the phosphoglycerate mutase family. BPG-dependent PGAM subfamily.

The enzyme catalyses (2R)-2-phosphoglycerate = (2R)-3-phosphoglycerate. Its pathway is carbohydrate degradation; glycolysis; pyruvate from D-glyceraldehyde 3-phosphate: step 3/5. In terms of biological role, catalyzes the interconversion of 2-phosphoglycerate and 3-phosphoglycerate. The polypeptide is 2,3-bisphosphoglycerate-dependent phosphoglycerate mutase 1 (Latilactobacillus sakei subsp. sakei (strain 23K) (Lactobacillus sakei subsp. sakei)).